The following is a 395-amino-acid chain: F-box/kelch-repeat protein At3g13680 (395 aa).

Residues 1-47 (MTTMGDLPGDLVEEILSRVPLTSLRAIRSTCQKWNSLSKSQICGRKA) enclose the F-box domain. 4 Kelch repeats span residues 154-202 (ILRI…SLKG), 210-256 (KKET…VSLA), 265-314 (VLYQ…FIDE), and 337-383 (IVYI…LVQL).

The sequence is that of F-box/kelch-repeat protein At3g13680 from Arabidopsis thaliana (Mouse-ear cress).